Reading from the N-terminus, the 471-residue chain is 3-isopropylmalate dehydratase large subunit (471 aa).

Positions 347, 407, and 410 each coordinate [4Fe-4S] cluster.

The protein belongs to the aconitase/IPM isomerase family. LeuC type 1 subfamily. In terms of assembly, heterodimer of LeuC and LeuD. [4Fe-4S] cluster serves as cofactor.

It catalyses the reaction (2R,3S)-3-isopropylmalate = (2S)-2-isopropylmalate. Its pathway is amino-acid biosynthesis; L-leucine biosynthesis; L-leucine from 3-methyl-2-oxobutanoate: step 2/4. Functionally, catalyzes the isomerization between 2-isopropylmalate and 3-isopropylmalate, via the formation of 2-isopropylmaleate. This chain is 3-isopropylmalate dehydratase large subunit, found in Buchnera aphidicola subsp. Baizongia pistaciae (strain Bp).